Reading from the N-terminus, the 147-residue chain is Globin, polymeric component P3 (147 aa).

Residues 2–146 (HLTADQVAAL…ISDALIAGLE (145 aa)) form the Globin domain. His-96 contacts heme b.

Belongs to the globin family. In terms of assembly, polymer.

The polypeptide is Globin, polymeric component P3 (Glycera dibranchiata (Bloodworm)).